The primary structure comprises 1022 residues: Probable E3 ubiquitin-protein ligase HERC6 (1022 aa).

RCC1 repeat units follow at residues 41–92, 93–145, 147–198, 200–253, and 254–304; these read NHRV…AVCH, KGRV…ALSK, SQVF…ALSL, GTSF…VLTQ, and DGKV…AYVH. The region spanning 693-1017 is the HECT domain; sequence EATDFCKVLV…INNNRGFVSP (325 aa). The Glycyl thioester intermediate role is filled by cysteine 985.

As to expression, detected in brain, heart, placenta and testis.

It is found in the cytoplasm. It localises to the cytosol. It carries out the reaction S-ubiquitinyl-[E2 ubiquitin-conjugating enzyme]-L-cysteine + [acceptor protein]-L-lysine = [E2 ubiquitin-conjugating enzyme]-L-cysteine + N(6)-ubiquitinyl-[acceptor protein]-L-lysine.. It functions in the pathway protein modification; protein ubiquitination. Its function is as follows. E3 ubiquitin-protein ligase which accepts ubiquitin from an E2 ubiquitin-conjugating enzyme in the form of a thioester and then directly transfers the ubiquitin to targeted substrates. This is Probable E3 ubiquitin-protein ligase HERC6 (HERC6) from Homo sapiens (Human).